The chain runs to 208 residues: 3-isopropylmalate dehydratase small subunit (208 aa).

Belongs to the LeuD family. LeuD type 1 subfamily. In terms of assembly, heterodimer of LeuC and LeuD.

It catalyses the reaction (2R,3S)-3-isopropylmalate = (2S)-2-isopropylmalate. It functions in the pathway amino-acid biosynthesis; L-leucine biosynthesis; L-leucine from 3-methyl-2-oxobutanoate: step 2/4. In terms of biological role, catalyzes the isomerization between 2-isopropylmalate and 3-isopropylmalate, via the formation of 2-isopropylmaleate. The sequence is that of 3-isopropylmalate dehydratase small subunit from Gluconobacter oxydans (strain 621H) (Gluconobacter suboxydans).